The following is a 372-amino-acid chain: UDP-2-acetamido-2,6-beta-L-arabino-hexul-4-ose reductase (372 aa).

Residues glycine 7–proline 30, leucine 53, tyrosine 103, and lysine 107 each bind NAD(+). Tyrosine 103 functions as the Proton acceptor in the catalytic mechanism. Substrate-binding positions include asparagine 132 and histidine 279 to valine 282.

It belongs to the NAD(P)-dependent epimerase/dehydratase family. Homodimer.

The enzyme catalyses UDP-2-acetamido-2,6-dideoxy-beta-L-arabino-hex-4-ulose + NADH + H(+) = UDP-2-acetamido-2,6-dideoxy-beta-L-talose + NAD(+). The catalysed reaction is UDP-2-acetamido-2,6-dideoxy-beta-L-arabino-hex-4-ulose + NADPH + H(+) = UDP-2-acetamido-2,6-dideoxy-beta-L-talose + NADP(+). It functions in the pathway bacterial outer membrane biogenesis; LPS O-antigen biosynthesis. Bifunctional enzyme that mediates C-3 epimerization of the second intermediate followed by reduction at C-4 during serogroup O11 O-antigen biosynthesis, thus catalyzing the conversion of UDP-N-acetyl-D-glucosamine to precursors for the biosynthesis of O antigen. The protein is UDP-2-acetamido-2,6-beta-L-arabino-hexul-4-ose reductase of Pseudomonas aeruginosa (strain ATCC 29260 / BCRC 12902 / CIP 102967 / NCIMB 11965 / PA103).